Consider the following 104-residue polypeptide: Fusaric acid biosynthesis protein 2 (104 aa).

Belongs to the YciI family.

Its pathway is mycotoxin biosynthesis. Its function is as follows. Part of the gene cluster that mediates the biosynthesis of fusaric acid, a mycotoxin with low to moderate toxicity to animals and humans, but with high phytotoxic properties. L-aspartate is suggested as fusaric acid amino acid precursor that is activated and further processed to O-acetyl-L-homoserine by cluster enzymes aspartate kinase FUB3 and homoserine O-acetyltransferase FUB5, as well as enzymes of the primary metabolism. The polyketide synthase (PKS) FUB1 generates the triketide trans-2-hexenal which is presumptively released by the hydrolase FUB4 and linked to the NRPS-bound amino acid precursor by NAD(P)-dependent dehydrogenase FUB6. FUB1, FUB4, and the non-canonical NRPS Fub8 may form an enzyme complex. Further processing of the NRPS-bound intermediate might be carried out by FUB6 and the sulfhydrylase FUB7, enabling a spontaneous electrocyclization to close the carbon backbone of fusaric acid. Dihydrofusaric acid is likely to be released via reduction by the thioester reductase (TR) domain of FUB8 whereupon the final oxidation to fusaric acid may (also) be performed by the FMN-dependent dehydrogenase FUB9. The polypeptide is Fusaric acid biosynthesis protein 2 (Gibberella fujikuroi (strain CBS 195.34 / IMI 58289 / NRRL A-6831) (Bakanae and foot rot disease fungus)).